The chain runs to 142 residues: Putative pre-16S rRNA nuclease (142 aa).

It belongs to the YqgF nuclease family.

It localises to the cytoplasm. In terms of biological role, could be a nuclease involved in processing of the 5'-end of pre-16S rRNA. This chain is Putative pre-16S rRNA nuclease, found in Saccharophagus degradans (strain 2-40 / ATCC 43961 / DSM 17024).